Consider the following 149-residue polypeptide: Large ribosomal subunit protein uL16c (149 aa).

The protein belongs to the universal ribosomal protein uL16 family. Part of the 50S ribosomal subunit.

It is found in the plastid. The protein resides in the organellar chromatophore. In Paulinella chromatophora, this protein is Large ribosomal subunit protein uL16c (rpl16).